The sequence spans 244 residues: 5-oxoprolinase subunit A (244 aa).

Belongs to the LamB/PxpA family. In terms of assembly, forms a complex composed of PxpA, PxpB and PxpC.

It catalyses the reaction 5-oxo-L-proline + ATP + 2 H2O = L-glutamate + ADP + phosphate + H(+). Catalyzes the cleavage of 5-oxoproline to form L-glutamate coupled to the hydrolysis of ATP to ADP and inorganic phosphate. This chain is 5-oxoprolinase subunit A, found in Salmonella typhi.